The sequence spans 471 residues: Sulfate adenylyltransferase subunit 1 (471 aa).

Residues K22–L239 form the tr-type G domain. The segment at G31–S38 is G1. G31 to S38 is a binding site for GTP. The segment at G89–D93 is G2. The tract at residues D110–G113 is G3. Residues D110–H114 and N165–D168 each bind GTP. Positions N165 to D168 are G4. The interval S202–L204 is G5.

It belongs to the TRAFAC class translation factor GTPase superfamily. Classic translation factor GTPase family. CysN/NodQ subfamily. As to quaternary structure, heterodimer composed of CysD, the smaller subunit, and CysN.

The enzyme catalyses sulfate + ATP + H(+) = adenosine 5'-phosphosulfate + diphosphate. The protein operates within sulfur metabolism; hydrogen sulfide biosynthesis; sulfite from sulfate: step 1/3. Functionally, with CysD forms the ATP sulfurylase (ATPS) that catalyzes the adenylation of sulfate producing adenosine 5'-phosphosulfate (APS) and diphosphate, the first enzymatic step in sulfur assimilation pathway. APS synthesis involves the formation of a high-energy phosphoric-sulfuric acid anhydride bond driven by GTP hydrolysis by CysN coupled to ATP hydrolysis by CysD. This is Sulfate adenylyltransferase subunit 1 from Alteromonas mediterranea (strain DSM 17117 / CIP 110805 / LMG 28347 / Deep ecotype).